The chain runs to 570 residues: Periplasmic trehalase (570 aa).

An N-terminal signal peptide occupies residues 1-34 (MIPPEIRRSVLLQKAIKLALAGTLLTFASFSATA). Residues Arg159, 166 to 167 (WD), Asn203, 212 to 214 (RSQ), 284 to 286 (RPE), and Gly317 contribute to the substrate site. Catalysis depends on proton donor/acceptor residues Asp319 and Glu503. Residue Glu518 participates in substrate binding. The segment at 544–570 (KPCDSVPSTRPASLSATPTKTPSAATQ) is disordered. Positions 554 to 570 (PASLSATPTKTPSAATQ) are enriched in low complexity.

It belongs to the glycosyl hydrolase 37 family. As to quaternary structure, monomer.

The protein localises to the periplasm. It carries out the reaction alpha,alpha-trehalose + H2O = alpha-D-glucose + beta-D-glucose. Functionally, provides the cells with the ability to utilize trehalose at high osmolarity by splitting it into glucose molecules that can subsequently be taken up by the phosphotransferase-mediated uptake system. This Salmonella dublin (strain CT_02021853) protein is Periplasmic trehalase.